The primary structure comprises 1083 residues: Carbamoyl phosphate synthase large chain (1083 aa).

A carboxyphosphate synthetic domain region spans residues 1–402 (MPRRDDIKKI…SFQKALRGLE (402 aa)). The ATP site is built by R129, R169, G175, G176, E208, I210, E215, G241, V242, H243, Q285, and E299. The region spanning 133–328 (KQAMDKIGLD…IAKIAAKLAV (196 aa)) is the ATP-grasp 1 domain. Positions 285, 299, and 301 each coordinate Mg(2+). Mn(2+) is bound by residues Q285, E299, and N301. Residues 403–557 (VGAFGFGSDP…YSTYESETEV (155 aa)) form an oligomerization domain region. Residues 558–944 (PAKGDKKRVV…AFAKSQLAAG (387 aa)) are carbamoyl phosphate synthetic domain. Residues 683–878 (SSLIDELGLR…VANLATKVMA (196 aa)) form the ATP-grasp 2 domain. Residues R719, R758, L760, E765, G790, V791, H792, S793, Q833, and E849 each contribute to the ATP site. 3 residues coordinate Mg(2+): Q833, E849, and N851. Mn(2+) contacts are provided by Q833, E849, and N851. Positions 945–1083 (TVLPESGKIF…SLQRRYAQNV (139 aa)) constitute an MGS-like domain. An allosteric domain region spans residues 945–1083 (TVLPESGKIF…SLQRRYAQNV (139 aa)).

This sequence belongs to the CarB family. In terms of assembly, composed of two chains; the small (or glutamine) chain promotes the hydrolysis of glutamine to ammonia, which is used by the large (or ammonia) chain to synthesize carbamoyl phosphate. Tetramer of heterodimers (alpha,beta)4. It depends on Mg(2+) as a cofactor. Mn(2+) is required as a cofactor.

The catalysed reaction is hydrogencarbonate + L-glutamine + 2 ATP + H2O = carbamoyl phosphate + L-glutamate + 2 ADP + phosphate + 2 H(+). It catalyses the reaction hydrogencarbonate + NH4(+) + 2 ATP = carbamoyl phosphate + 2 ADP + phosphate + 2 H(+). It functions in the pathway amino-acid biosynthesis; L-arginine biosynthesis; carbamoyl phosphate from bicarbonate: step 1/1. The protein operates within pyrimidine metabolism; UMP biosynthesis via de novo pathway; (S)-dihydroorotate from bicarbonate: step 1/3. Functionally, large subunit of the glutamine-dependent carbamoyl phosphate synthetase (CPSase). CPSase catalyzes the formation of carbamoyl phosphate from the ammonia moiety of glutamine, carbonate, and phosphate donated by ATP, constituting the first step of 2 biosynthetic pathways, one leading to arginine and/or urea and the other to pyrimidine nucleotides. The large subunit (synthetase) binds the substrates ammonia (free or transferred from glutamine from the small subunit), hydrogencarbonate and ATP and carries out an ATP-coupled ligase reaction, activating hydrogencarbonate by forming carboxy phosphate which reacts with ammonia to form carbamoyl phosphate. The protein is Carbamoyl phosphate synthase large chain of Rhodopirellula baltica (strain DSM 10527 / NCIMB 13988 / SH1).